We begin with the raw amino-acid sequence, 251 residues long: Probable transcriptional regulatory protein NFA_37020 (251 aa).

Belongs to the TACO1 family.

The protein localises to the cytoplasm. In Nocardia farcinica (strain IFM 10152), this protein is Probable transcriptional regulatory protein NFA_37020.